Consider the following 95-residue polypeptide: MSYTIAAQVRTEIGKGSSRRLRHAKKVPAVIYGPGKEAISIVFDHKDIINIQENQDFYTSELTIALEGKDVKVRVQDMQRHAFKPMIEHVDFKFA.

The protein belongs to the bacterial ribosomal protein bL25 family. Part of the 50S ribosomal subunit; part of the 5S rRNA/L5/L18/L25 subcomplex. Contacts the 5S rRNA. Binds to the 5S rRNA independently of L5 and L18.

In terms of biological role, this is one of the proteins that binds to the 5S RNA in the ribosome where it forms part of the central protuberance. This is Large ribosomal subunit protein bL25 from Shewanella pealeana (strain ATCC 700345 / ANG-SQ1).